A 510-amino-acid chain; its full sequence is MIWHVQNEVFILDSTRIFMKAFHLLLFNGSFILPECILIFGLILLLMIDSTSDQKDRPWFYFISSTSLVMSITALLFRWREEPMISFSGNFQTNNFNEIFQFLILLCSTLCIPLSVEYIECTEMAITEFLLFILTATLGGMFLCGANDLITIFVALECFSLCSYLLSGYTKRDVRSNEATTKYLLMGGASSSILVHGFSWLYGLSGGEIELQEIVNGLINTQMYNSPGISIALIFITVGIGFKLSLAPFHQWTPDVYEGSPTPVVAFLSVTSKVAASALATRIFDIPFYFSSNEWHLLLEILAILSMILGNLIAITQTSMKRMLAYSSIGQIGYVIIGIIVGDSNDGYASMITYMLFYIAMNLGTFARIVLFGLRTGTDNIRDYAGLYTKDPFLALSLALCLLSLGGLPPLAGFFGKLHLFWCGWQAGLYFLVSIGLLTSVVSIYYYLKIIKLLMTGRNQEITPHVRNYRKSPLRSNNSIELSMTVCVIASTIPGISMNPILAIAQDTLF.

13 helical membrane passes run 24–44 (LLLF…GLIL), 59–79 (WFYF…LFRW), 99–119 (IFQF…VEYI), 124–144 (MAIT…MFLC), 149–169 (LITI…LSGY), 184–204 (LLMG…LYGL), 229–249 (ISIA…LAPF), 262–284 (TPVV…TRIF), 295–315 (WHLL…LIAI), 323–343 (MLAY…IVGD), 354–374 (YMLF…LFGL), 395–415 (ALSL…AGFF), and 418–438 (LHLF…IGLL).

This sequence belongs to the complex I subunit 2 family. As to quaternary structure, NDH is composed of at least 16 different subunits, 5 of which are encoded in the nucleus.

It is found in the plastid. The protein localises to the chloroplast thylakoid membrane. It carries out the reaction a plastoquinone + NADH + (n+1) H(+)(in) = a plastoquinol + NAD(+) + n H(+)(out). It catalyses the reaction a plastoquinone + NADPH + (n+1) H(+)(in) = a plastoquinol + NADP(+) + n H(+)(out). Functionally, NDH shuttles electrons from NAD(P)H:plastoquinone, via FMN and iron-sulfur (Fe-S) centers, to quinones in the photosynthetic chain and possibly in a chloroplast respiratory chain. The immediate electron acceptor for the enzyme in this species is believed to be plastoquinone. Couples the redox reaction to proton translocation, and thus conserves the redox energy in a proton gradient. This chain is NAD(P)H-quinone oxidoreductase subunit 2 B, chloroplastic, found in Lemna minor (Common duckweed).